Consider the following 2079-residue polypeptide: von Willebrand factor A domain-containing protein DDB_G0286969 (2079 aa).

The 137-residue stretch at 11 to 147 (EQILPSFISI…ELEIIITYST (137 aa)) folds into the VIT domain. The segment at 178 to 203 (NENSTTNTNTQTQPQSVNTTTTTTPS) is disordered. A compositionally biased stretch (low complexity) spans 180-203 (NSTTNTNTQTQPQSVNTTTTTTPS). Residues 354-525 (ELIFLVDVSE…KVMRQLKRAL (172 aa)) enclose the VWFA domain. Disordered stretches follow at residues 761 to 800 (PTTLSGSGIPFYNPSSPNHDRNINTTQQPTPTQSTPLKTP), 832 to 866 (PFVPSPNKLPTTTTSAPATTPITTPAPTTTTTEVK), 956 to 1139 (AKPV…TKPT), 1155 to 1203 (NEPA…VSST), and 1239 to 1294 (DSNT…ADAE). Composition is skewed to low complexity over residues 785-800 (TTQQPTPTQSTPLKTP), 841-866 (PTTTTSAPATTPITTPAPTTTTTEVK), and 956-973 (AKPVEPAVVQQQQPQQTK). The stretch at 923–957 (EMIKIAEAKAAAEQKAAAEQKAIADAKAAAEQAAK) forms a coiled coil. Basic and acidic residues predominate over residues 974–989 (PKADKQSKQNAKDNKQ). Residues 992-1006 (KPVVVEQKPPVVTET) are compositionally biased toward low complexity. The segment covering 1007–1021 (KPTVATESATPTKPT) has biased composition (polar residues). The segment covering 1023–1061 (AQAAAAAAAAAQQAAQQAAATTPVKQQPTKQTTPNKSTP) has biased composition (low complexity). The span at 1092-1111 (KPVETKPVEQTKPVETKPVE) shows a compositional bias: basic and acidic residues. Residues 1176 to 1198 (NNNNNNNNNNNNNNNNNNNNNNN) show a composition bias toward low complexity. Polar residues predominate over residues 1239–1272 (DSNTKAPDSLKTTPIFSNGPQGISPSSGNGSNKS). Over residues 1280-1292 (DRGGRGGRDRNAD) the composition is skewed to basic and acidic residues. The MIF4G domain maps to 1317–1527 (LKKFKFNLNR…LDLIDLRANK (211 aa)). The disordered stretch occupies residues 1530-1755 (PKNSTQTKTK…PAPVEPVKPK (226 aa)). Basic and acidic residues-rich tracts occupy residues 1538–1550 (TKKDESDKEERFI), 1557–1599 (QKRE…RDAP), and 1621–1634 (NNRDKGGRGGDRSG). Low complexity-rich tracts occupy residues 1635-1659 (GKQSPSGKKDSGFGPSSGGSSLFGS) and 1688-1699 (SSSIPSIPNRSN). Over residues 1725 to 1740 (SNDRDSRGPSKPDNRK) the composition is skewed to basic and acidic residues. An MI domain is found at 1760–1882 (KIEDDISMTL…PLNYLEEAYA (123 aa)).

The protein is von Willebrand factor A domain-containing protein DDB_G0286969 of Dictyostelium discoideum (Social amoeba).